Here is a 516-residue protein sequence, read N- to C-terminus: Poly(U)-binding-splicing factor PUF60-B (516 aa).

RRM domains are found at residues Cys86 to Ser164 and Asn183 to Thr261. Residues Thr356 to Glu398 are disordered. Positions Thr372–Ser388 are enriched in basic and acidic residues. Residues Thr419 to Gln506 form the RRM 3; atypical domain.

The protein belongs to the RRM half pint family.

The protein localises to the nucleus. DNA- and RNA-binding protein, involved in transcription repression and pre-mRNA splicing. This Danio rerio (Zebrafish) protein is Poly(U)-binding-splicing factor PUF60-B (puf60b).